The primary structure comprises 571 residues: Putative pyruvate decarboxylase C13A11.06 (571 aa).

Residues D29 and H118 each coordinate pyruvate. Thiamine diphosphate contacts are provided by residues T395 and 418-420 (GSI). Residue D450 coordinates Mg(2+). Thiamine diphosphate-binding positions include 451-452 (GS) and 477-482 (NDGYTI). N477 and G479 together coordinate Mg(2+). A pyruvate-binding site is contributed by E483.

Belongs to the TPP enzyme family. In terms of assembly, homotetramer. Mg(2+) serves as cofactor. Thiamine diphosphate is required as a cofactor.

It catalyses the reaction a 2-oxocarboxylate + H(+) = an aldehyde + CO2. The enzyme catalyses pyruvate + H(+) = acetaldehyde + CO2. This chain is Putative pyruvate decarboxylase C13A11.06, found in Schizosaccharomyces pombe (strain 972 / ATCC 24843) (Fission yeast).